The chain runs to 503 residues: ATP synthase subunit alpha (503 aa).

170 to 177 (GDRQTGKT) is a binding site for ATP.

It belongs to the ATPase alpha/beta chains family. As to quaternary structure, F-type ATPases have 2 components, CF(1) - the catalytic core - and CF(0) - the membrane proton channel. CF(1) has five subunits: alpha(3), beta(3), gamma(1), delta(1), epsilon(1). CF(0) has three main subunits: a(1), b(2) and c(9-12). The alpha and beta chains form an alternating ring which encloses part of the gamma chain. CF(1) is attached to CF(0) by a central stalk formed by the gamma and epsilon chains, while a peripheral stalk is formed by the delta and b chains.

It is found in the cell inner membrane. It carries out the reaction ATP + H2O + 4 H(+)(in) = ADP + phosphate + 5 H(+)(out). Functionally, produces ATP from ADP in the presence of a proton gradient across the membrane. The alpha chain is a regulatory subunit. The sequence is that of ATP synthase subunit alpha from Geobacter metallireducens (strain ATCC 53774 / DSM 7210 / GS-15).